A 300-amino-acid polypeptide reads, in one-letter code: Fluorinase (300 aa).

S-adenosyl-L-methionine is bound by residues D16, 21–23 (DDS), Y77, S158, D211, N216, 270–271 (SR), and 278–280 (RNA).

This sequence belongs to the SAM hydrolase / SAM-dependent halogenase family. As to quaternary structure, homohexamer.

The catalysed reaction is fluoride + S-adenosyl-L-methionine = 5'-deoxy-5'-fluoroadenosine + L-methionine. It catalyses the reaction chloride + S-adenosyl-L-methionine = 5'-chloro-5'-deoxyadenosine + L-methionine. Its activity is regulated as follows. Activity is severely inhibited by 1 mM Cu(2+) or Zn(2+). Catalyzes the formation of a C-F bond by combining S-adenosyl-L-methionine (SAM) and fluoride to generate 5'-fluoro-5'-deoxyadenosine (5'-FDA) and L-methionine. Probably involved in fluoroacetate (FAc) and 4-fluorothreonine (4-FT) biosynthesis. In vitro, can also catalyze the conversion of chloride and SAM to 5'-chloro-5'-deoxyadenosine (5'-CIDA) and L-methionine in the presence of L-amino acid oxidase. The chain is Fluorinase from Nocardia brasiliensis (strain ATCC 700358 / HUJEG-1).